The sequence spans 1167 residues: Chromosome partition protein Smc (1167 aa).

Position 32–39 (32–39 (PNGCGKSN)) interacts with ATP. Coiled coils occupy residues 170–274 (ISKY…RIET), 310–390 (QREL…HNRD), 468–500 (GLQE…LETL), 653–870 (ALLR…ERAL), and 982–1011 (EYLD…ETRG).

The protein belongs to the SMC family. Homodimer.

The protein localises to the cytoplasm. Its function is as follows. Required for chromosome condensation and partitioning. This is Chromosome partition protein Smc from Xanthomonas oryzae pv. oryzae (strain KACC10331 / KXO85).